Reading from the N-terminus, the 456-residue chain is Bifunctional protein GlmU (456 aa).

Residues 1–231 are pyrophosphorylase; it reads MERTCLAIIL…EEELTGCNTR (231 aa). UDP-N-acetyl-alpha-D-glucosamine-binding positions include 10 to 13, lysine 24, glutamine 77, and 82 to 83; these read LAAG and GT. A Mg(2+)-binding site is contributed by aspartate 107. The UDP-N-acetyl-alpha-D-glucosamine site is built by glycine 143, glutamate 157, asparagine 172, and asparagine 229. Asparagine 229 provides a ligand contact to Mg(2+). Positions 232–252 are linker; it reads AELAYIERLWQQRRRHELMLA. An N-acetyltransferase region spans residues 253 to 456; it reads GVSMVAPETV…LARKIAKAAE (204 aa). UDP-N-acetyl-alpha-D-glucosamine contacts are provided by arginine 318 and lysine 336. Histidine 348 serves as the catalytic Proton acceptor. Residues tyrosine 351 and asparagine 362 each contribute to the UDP-N-acetyl-alpha-D-glucosamine site. Acetyl-CoA contacts are provided by residues alanine 365, 371–372, serine 390, serine 408, and arginine 425; that span reads NY.

In the N-terminal section; belongs to the N-acetylglucosamine-1-phosphate uridyltransferase family. The protein in the C-terminal section; belongs to the transferase hexapeptide repeat family. Homotrimer. Mg(2+) serves as cofactor.

It localises to the cytoplasm. It carries out the reaction alpha-D-glucosamine 1-phosphate + acetyl-CoA = N-acetyl-alpha-D-glucosamine 1-phosphate + CoA + H(+). It catalyses the reaction N-acetyl-alpha-D-glucosamine 1-phosphate + UTP + H(+) = UDP-N-acetyl-alpha-D-glucosamine + diphosphate. The protein operates within nucleotide-sugar biosynthesis; UDP-N-acetyl-alpha-D-glucosamine biosynthesis; N-acetyl-alpha-D-glucosamine 1-phosphate from alpha-D-glucosamine 6-phosphate (route II): step 2/2. It functions in the pathway nucleotide-sugar biosynthesis; UDP-N-acetyl-alpha-D-glucosamine biosynthesis; UDP-N-acetyl-alpha-D-glucosamine from N-acetyl-alpha-D-glucosamine 1-phosphate: step 1/1. Its pathway is bacterial outer membrane biogenesis; LPS lipid A biosynthesis. Catalyzes the last two sequential reactions in the de novo biosynthetic pathway for UDP-N-acetylglucosamine (UDP-GlcNAc). The C-terminal domain catalyzes the transfer of acetyl group from acetyl coenzyme A to glucosamine-1-phosphate (GlcN-1-P) to produce N-acetylglucosamine-1-phosphate (GlcNAc-1-P), which is converted into UDP-GlcNAc by the transfer of uridine 5-monophosphate (from uridine 5-triphosphate), a reaction catalyzed by the N-terminal domain. The chain is Bifunctional protein GlmU from Sinorhizobium medicae (strain WSM419) (Ensifer medicae).